The following is a 548-amino-acid chain: MAAKDVLFGDSARAKMLVGVNILADAVRVTLGPKGRNVVIEKSFGAPIITKDGVSVAREIELKDKFENMGAQMVKEVASQANDQAGDGTTTATVLAQAIISEGLKSVAAGMNPMDLKRGIDKATAAVVAAIKEQAQPCLDTKAIAQVGTISANADETVGRLIAEAMEKVGKEGVITVEEGKGLEDELDVVEGMQFDRGYLSPYFINNQEKMTVEMENPLILLVDKKIDNLQELLPILENVAKSGRPLLIVAEDVEGQALATLVVNNLRGTFKVAAVKAPGFGDRRKAMLQDLAILTGGQVISEELGMSLETADPSSLGTASKVVIDKENTVIVDGAGTEASVNTRVDQIRAEIESSTSDYDIEKLQERVAKLAGGVAVIKVGAGSEMEMKEKKDRVDDALHATRAAVEEGVVAGGGVALIRALSSVTVVGDNEDQNVGIALALRAMEAPIRQIAGNAGAEGSVVVDKVKSGTGSFGFNASTGEYGDMIAMGILDPAKVTRSSLQAAASIAGLMITTEAMVADAPVEEGAGGMPDMGGMGGMGGMPGMM.

Residues 30 to 33 (TLGP), lysine 51, 87 to 91 (DGTTT), glycine 415, and aspartate 494 each bind ATP.

The protein belongs to the chaperonin (HSP60) family. Forms a cylinder of 14 subunits composed of two heptameric rings stacked back-to-back. Interacts with the co-chaperonin GroES.

The protein resides in the cytoplasm. The catalysed reaction is ATP + H2O + a folded polypeptide = ADP + phosphate + an unfolded polypeptide.. Its function is as follows. Together with its co-chaperonin GroES, plays an essential role in assisting protein folding. The GroEL-GroES system forms a nano-cage that allows encapsulation of the non-native substrate proteins and provides a physical environment optimized to promote and accelerate protein folding. This Oleispira antarctica protein is Chaperonin GroEL.